The sequence spans 233 residues: U2 small nuclear ribonucleoprotein A' (233 aa).

4 LRR repeats span residues 20-40 (KLTL…AITQ), 42-63 (KYQV…PKRF), 65-86 (NLQC…SFPS), and 89-110 (HITS…FKDK). Positions 122–160 (NPITEMENYRYFIIWLIPSLKVLDFKKVKQAERKTSEDM) constitute an LRRCT domain.

The protein belongs to the U2 small nuclear ribonucleoprotein A family. As to quaternary structure, associated with the spliceosome.

Its subcellular location is the nucleus. In terms of biological role, involved in pre-mRNA splicing. The polypeptide is U2 small nuclear ribonucleoprotein A' (LEA1) (Candida albicans (strain SC5314 / ATCC MYA-2876) (Yeast)).